The following is a 394-amino-acid chain: Elongation factor Tu 2 (394 aa).

A tr-type G domain is found at 10-204 (KPHVNVGTIG…YLDTYIPEPE (195 aa)). The interval 19–26 (GHVDHGKT) is G1. Position 19-26 (19-26 (GHVDHGKT)) interacts with GTP. Threonine 26 contributes to the Mg(2+) binding site. The segment at 60–64 (GITIN) is G2. Residues 81 to 84 (DCPG) are G3. Residues 81 to 85 (DCPGH) and 136 to 139 (NKCD) each bind GTP. Residues 136 to 139 (NKCD) are G4. The tract at residues 174–176 (SAL) is G5.

The protein belongs to the TRAFAC class translation factor GTPase superfamily. Classic translation factor GTPase family. EF-Tu/EF-1A subfamily. In terms of assembly, monomer.

It is found in the cytoplasm. The enzyme catalyses GTP + H2O = GDP + phosphate + H(+). Functionally, GTP hydrolase that promotes the GTP-dependent binding of aminoacyl-tRNA to the A-site of ribosomes during protein biosynthesis. This chain is Elongation factor Tu 2, found in Yersinia enterocolitica serotype O:8 / biotype 1B (strain NCTC 13174 / 8081).